We begin with the raw amino-acid sequence, 277 residues long: Secoisolariciresinol dehydrogenase (277 aa).

Residues 24-29, Asp48, Val73, and Asn99 each bind NAD(+); that span reads GGASGI. Ser163 serves as a coordination point for substrate. The active-site Proton donor/acceptor is the Tyr166. Residue Lys170 coordinates NAD(+).

It belongs to the short-chain dehydrogenases/reductases (SDR) family. Homotetramer.

It carries out the reaction (-)-secoisolariciresinol + 2 NAD(+) = (-)-matairesinol + 2 NADH + 2 H(+). In terms of biological role, oxidoreductase involved in lignan biosynthesis. Catalyzes the stereospecific conversion of (-)-secoisolariciresinol to (-)-matairesinol via a lactol intermediate. In Forsythia intermedia (Border forsythia), this protein is Secoisolariciresinol dehydrogenase.